The primary structure comprises 339 residues: Senescence-specific cysteine protease SAG39 (339 aa).

Residues 1-23 form the signal peptide; it reads MAMAKALLFAILGCLCLCSAVLA. 3 cysteine pairs are disulfide-bonded: Cys-144-Cys-187, Cys-178-Cys-220, and Cys-276-Cys-328. Residue Cys-147 is part of the active site. Catalysis depends on residues His-282 and Asn-303.

The protein belongs to the peptidase C1 family. Low expression in mature leaves.

Its subcellular location is the vacuole. Cysteine protease that may have a developmental senescence specific cell death function during apoptosis, heavy metal detoxification, and hypersensitive response. The polypeptide is Senescence-specific cysteine protease SAG39 (Oryza sativa subsp. japonica (Rice)).